A 301-amino-acid chain; its full sequence is Probable 5-dehydro-4-deoxyglucarate dehydratase (301 aa).

Belongs to the DapA family.

It catalyses the reaction 5-dehydro-4-deoxy-D-glucarate + H(+) = 2,5-dioxopentanoate + CO2 + H2O. Its pathway is carbohydrate acid metabolism; D-glucarate degradation; 2,5-dioxopentanoate from D-glucarate: step 2/2. This is Probable 5-dehydro-4-deoxyglucarate dehydratase from Cereibacter sphaeroides (strain KD131 / KCTC 12085) (Rhodobacter sphaeroides).